A 194-amino-acid chain; its full sequence is Endonuclease V (194 aa).

The Mg(2+) site is built by Asp-31 and Glu-95.

Belongs to the endonuclease V family. It depends on Mg(2+) as a cofactor.

The protein localises to the cytoplasm. The enzyme catalyses Endonucleolytic cleavage at apurinic or apyrimidinic sites to products with a 5'-phosphate.. In terms of biological role, DNA repair enzyme involved in the repair of deaminated bases. Selectively cleaves double-stranded DNA at the second phosphodiester bond 3' to a deoxyinosine leaving behind the intact lesion on the nicked DNA. This chain is Endonuclease V, found in Pyrococcus abyssi (strain GE5 / Orsay).